The chain runs to 469 residues: UDP-N-acetylmuramate--L-alanine ligase (469 aa).

119-125 (GTHGKTT) lines the ATP pocket.

Belongs to the MurCDEF family.

The protein resides in the cytoplasm. The catalysed reaction is UDP-N-acetyl-alpha-D-muramate + L-alanine + ATP = UDP-N-acetyl-alpha-D-muramoyl-L-alanine + ADP + phosphate + H(+). It functions in the pathway cell wall biogenesis; peptidoglycan biosynthesis. Functionally, cell wall formation. The protein is UDP-N-acetylmuramate--L-alanine ligase of Ruthia magnifica subsp. Calyptogena magnifica.